A 237-amino-acid chain; its full sequence is Phosphoribosylaminoimidazole-succinocarboxamide synthase (237 aa).

It belongs to the SAICAR synthetase family.

The enzyme catalyses 5-amino-1-(5-phospho-D-ribosyl)imidazole-4-carboxylate + L-aspartate + ATP = (2S)-2-[5-amino-1-(5-phospho-beta-D-ribosyl)imidazole-4-carboxamido]succinate + ADP + phosphate + 2 H(+). Its pathway is purine metabolism; IMP biosynthesis via de novo pathway; 5-amino-1-(5-phospho-D-ribosyl)imidazole-4-carboxamide from 5-amino-1-(5-phospho-D-ribosyl)imidazole-4-carboxylate: step 1/2. The protein is Phosphoribosylaminoimidazole-succinocarboxamide synthase of Alteromonas mediterranea (strain DSM 17117 / CIP 110805 / LMG 28347 / Deep ecotype).